A 425-amino-acid chain; its full sequence is Trigger factor (425 aa).

One can recognise a PPIase FKBP-type domain in the interval 163–248 (GDTAVIDFEG…VHEIKTKELP (86 aa)).

It belongs to the FKBP-type PPIase family. Tig subfamily.

Its subcellular location is the cytoplasm. It catalyses the reaction [protein]-peptidylproline (omega=180) = [protein]-peptidylproline (omega=0). Functionally, involved in protein export. Acts as a chaperone by maintaining the newly synthesized protein in an open conformation. Functions as a peptidyl-prolyl cis-trans isomerase. In Bacillus anthracis (strain A0248), this protein is Trigger factor.